A 374-amino-acid polypeptide reads, in one-letter code: MAIRKKSTKSPPVLSHEFVLQNHADIVSCVAMVFLLGLMFEITAKASIIFVTLQYNVTLPATEEQATESVSLYYYGIKDLATVFFYMLVAIIIHAVIQEYMLDKINRRMHFSKTKHSKFNESGQLSAFYLFACVWGTFILISENYISDPTILWRAYPHNLMTFQMKFFYISQLAYWLHAFPELYFQKTKKEDIPRQLVYIGLYLFHIAGAYLLNLNHLGLVLLVLHYFVEFLFHISRLFYFSNEKYQKGFSLWAVLFVLGRLLTLILSVLTVGFGLARAENQKLDFSTGNFNVLAVRIAVLASICVTQAFMMWKFINFQLRRWREHSAFQAPAVKKKPTVTKGRSSKKGTENGVNGTLTSNVADSPRNKKEKSS.

The Cytoplasmic portion of the chain corresponds to 1–29 (MAIRKKSTKSPPVLSHEFVLQNHADIVSC). A helical membrane pass occupies residues 30 to 50 (VAMVFLLGLMFEITAKASIIF). Over 51–76 (VTLQYNVTLPATEEQATESVSLYYYG) the chain is Lumenal. Residue Asn-56 is glycosylated (N-linked (GlcNAc...) asparagine). The chain crosses the membrane as a helical span at residues 77–97 (IKDLATVFFYMLVAIIIHAVI). The Cytoplasmic segment spans residues 98 to 121 (QEYMLDKINRRMHFSKTKHSKFNE). Residues 117–326 (SKFNESGQLS…NFQLRRWREH (210 aa)) enclose the TLC domain. The chain crosses the membrane as a helical span at residues 122–142 (SGQLSAFYLFACVWGTFILIS). Residues 143 to 159 (ENYISDPTILWRAYPHN) are Lumenal-facing. Residues 160–180 (LMTFQMKFFYISQLAYWLHAF) form a helical membrane-spanning segment. Topologically, residues 181 to 192 (PELYFQKTKKED) are cytoplasmic. The helical transmembrane segment at 193–213 (IPRQLVYIGLYLFHIAGAYLL) threads the bilayer. Topologically, residues 214–217 (NLNH) are lumenal. Residues 218-238 (LGLVLLVLHYFVEFLFHISRL) form a helical membrane-spanning segment. Topologically, residues 239 to 251 (FYFSNEKYQKGFS) are cytoplasmic. The chain crosses the membrane as a helical span at residues 252–272 (LWAVLFVLGRLLTLILSVLTV). The Lumenal portion of the chain corresponds to 273–297 (GFGLARAENQKLDFSTGNFNVLAVR). The helical transmembrane segment at 298–318 (IAVLASICVTQAFMMWKFINF) threads the bilayer. Residues 319-374 (QLRRWREHSAFQAPAVKKKPTVTKGRSSKKGTENGVNGTLTSNVADSPRNKKEKSS) are Cytoplasmic-facing. Residues 334 to 347 (VKKKPTVTKGRSSK) are compositionally biased toward basic residues. The tract at residues 334–374 (VKKKPTVTKGRSSKKGTENGVNGTLTSNVADSPRNKKEKSS) is disordered. The segment covering 352 to 363 (NGVNGTLTSNVA) has biased composition (polar residues). At Ser-365 the chain carries Phosphoserine.

Belongs to the TRAM family. In terms of assembly, interacts with SEC61B. May interact with Derlin-1/DERL1. (Microbial infection) Interacts with human cytomegalovirus/HHV-5 proteins US2 and US11. N-glycosylated.

Its subcellular location is the endoplasmic reticulum membrane. Functionally, involved in the translocation of nascent protein chains into or through the endoplasmic reticulum (ER) membrane by facilitating the proper chain positioning at the SEC61 channel. Regulates the exposure of nascent secretory protein chain to the cytosol during translocation into the ER. May affect the phospholipid bilayer in the vicinity of the lateral gate of the SEC61 channel, thereby facilitating ER protein transport. Intimately associates with transmembrane (TM) domain of nascent membrane proteins during the entire integration process into the ER membrane. Associates with the second TM domain of G-protein-coupled receptor opsin/OPSD nascent chain in the ER membrane, which may facilitate its integration into the membrane. Under conditions of ER stress, participates in the disposal of misfolded ER membrane proteins during the unfolded protein response (UPR), an integrated stress response (ISR) pathway, by selectively retrotranslocating misfolded ER-membrane proteins from the ER into the cytosol where they are ubiquitinated and degraded by the proteasome. In terms of biological role, (Microbial infection) In case of cytomegalovirus infection, participates in US2- and US11-mediated ER-to-cytosol retrotranslocation and subsequent degradation of major histocompatibility complex (MHC) class I heavy chains, thereby decreasing the immune detection by cytotoxic T-cells. This is Translocating chain-associated membrane protein 1 from Homo sapiens (Human).